Reading from the N-terminus, the 557-residue chain is Potassium-transporting ATPase potassium-binding subunit (557 aa).

12 helical membrane-spanning segments follow: residues 5–25 (GFLL…PLGS), 63–83 (LSAI…MLLG), 132–152 (GLTV…FALI), 170–190 (LLRI…LFFI), 253–273 (FVQM…FGEV), 283–303 (LLWA…WAEV), 329–349 (VLVS…AVIA), 356–376 (ALGG…FGGV), 379–399 (GLYG…LMIG), 416–436 (LTAL…ALAM), 484–504 (LLAL…MAIA), and 526–546 (LFVG…FIPA).

The protein belongs to the KdpA family. The system is composed of three essential subunits: KdpA, KdpB and KdpC.

It localises to the cell inner membrane. Its function is as follows. Part of the high-affinity ATP-driven potassium transport (or Kdp) system, which catalyzes the hydrolysis of ATP coupled with the electrogenic transport of potassium into the cytoplasm. This subunit binds the periplasmic potassium ions and delivers the ions to the membrane domain of KdpB through an intramembrane tunnel. The protein is Potassium-transporting ATPase potassium-binding subunit of Escherichia coli O6:H1 (strain CFT073 / ATCC 700928 / UPEC).